Reading from the N-terminus, the 504-residue chain is Serine O-succinyltransferase (504 aa).

The transit peptide at 1–26 (MLRASSKRLQLSWQVFRRFQSSNPQL) directs the protein to the mitochondrion. The segment at 49–70 (QACPNSVDPSASITSPSLSSGP) is disordered. Low complexity predominate over residues 57–70 (PSASITSPSLSSGP). Positions 117–395 (NAILLHTGLS…SAEEIIKLNE (279 aa)) constitute an AB hydrolase-1 domain. The important for substrate specificity stretch occupies residues 124 to 127 (GLSA). S221 acts as the Nucleophile in catalysis. R290 is a substrate binding site. Residues D443 and H480 contribute to the active site. Position 481 (D481) interacts with substrate.

This sequence belongs to the AB hydrolase superfamily. MetX family.

It is found in the mitochondrion. It catalyses the reaction succinyl-CoA + L-serine = O-succinyl-L-serine + CoA. The protein operates within amino-acid biosynthesis; L-cysteine biosynthesis; L-cysteine from L-serine: step 1/2. In terms of biological role, transfers a succinyl group from succinyl-CoA to L-serine, forming succinyl-L-serine. Also has weak serine acetyl transferase activity and homoserine succinyl transferase activity. The chain is Serine O-succinyltransferase from Schizosaccharomyces pombe (strain 972 / ATCC 24843) (Fission yeast).